The primary structure comprises 632 residues: Arginine--tRNA ligase (632 aa).

Residues 120–130 carry the 'HIGH' region motif; that stretch reads ANPIHPLHIGH.

It belongs to the class-I aminoacyl-tRNA synthetase family.

It is found in the cytoplasm. It carries out the reaction tRNA(Arg) + L-arginine + ATP = L-arginyl-tRNA(Arg) + AMP + diphosphate. The chain is Arginine--tRNA ligase from Pyrobaculum islandicum (strain DSM 4184 / JCM 9189 / GEO3).